Reading from the N-terminus, the 632-residue chain is MAMESALTSTRVSIPSLCSGISSSHHHHRSLSFLNFPKLSSFKYSFRTISPVPFVVSASSVSPSSPSTSVAQSQDLKIKSVPTKPIEGQKTGTSGLRKKVKVFMQDNYLANWIQALFNSLPLEDYKNGLLVLGGDGRYFNREAAQIIIKIAAGNGVGKILVGKDGILSTQAVSAVIRKREANGGFIMSASHNPGGPEYDWGIKFNYSSGQPAPESITDKIYGNTLSISEIKIADIPDVDLSQLGVTKYGNFSVEVVDPVADYLELMENVFDFSLIRSLVSRPDFRFVFDAMHAVTGAYAKPIFVDKLGASLESIANGVPLEDFGHGHPDPNLTYAEDLVNILYGENGPDFGAASDGDGDRNMILGRSFFVTPSDSVAIIAAQCQYAIHYFQSGPKGLARSMPTSGSLDRVAQKLNLPFFEVPTGWKFFGNLMDAGKLSICGEESFGTGSDHIREKDGIWAVLAWLSILAYRNKDKKSGEKLVSVADVVKDHWATYGRNFFSRYDYEECESEGANNMIEYLRDLISKSKAGDKYGSYSLDFADDFAYTDPVDGSVASKQGVRFVFSDGSRIIFRLSGTGSAGATVRIYIEQFEPDVSKHDMDAQIALKPLIDLALSVSKLKDFTGREKPTVIT.

A chloroplast-targeting transit peptide spans 1–72; that stretch reads MAMESALTST…PSSPSTSVAQ (72 aa). The alpha-D-glucose 1,6-bisphosphate site is built by arginine 97 and serine 190. Serine 190 (phosphoserine intermediate) is an active-site residue. Mg(2+) contacts are provided by serine 190, aspartate 355, aspartate 357, and aspartate 359. Phosphoserine is present on serine 190. Alpha-D-glucose 1,6-bisphosphate-binding residues include aspartate 359, arginine 360, threonine 423, glutamate 442, serine 444, and lysine 455.

It belongs to the phosphohexose mutase family. In terms of assembly, monomer. Requires Mg(2+) as cofactor.

The protein resides in the plastid. It is found in the chloroplast. It catalyses the reaction alpha-D-glucose 1-phosphate = alpha-D-glucose 6-phosphate. It carries out the reaction O-phospho-L-seryl-[protein] + alpha-D-glucose 1-phosphate = alpha-D-glucose 1,6-bisphosphate + L-seryl-[protein]. The enzyme catalyses alpha-D-glucose 1,6-bisphosphate + L-seryl-[protein] = O-phospho-L-seryl-[protein] + alpha-D-glucose 6-phosphate. Its activity is regulated as follows. Inhibited by the Calvin cycle intermediates fructose-1,6-bisphosphate and ribulose-1,5-bisphosphate. Catalyzes the reversible isomerization of alpha-D-glucose 1-phosphate to alpha-D-glucose 6-phosphate. The mechanism proceeds via the intermediate compound alpha-D-glucose 1,6-bisphosphate. This enzyme participates in both the breakdown and synthesis of glucose. Promotes gravitropic responses, negative in shoots but positive in roots, by facilitating starch granules (statoliths) formation. This Solanum tuberosum (Potato) protein is Phosphoglucomutase, chloroplastic (PGMP).